The chain runs to 634 residues: Chaperone protein HtpG (634 aa).

The tract at residues 1-342 (MTVDTDKQTL…SADLSLNVSR (342 aa)) is a; substrate-binding. Positions 343–559 (EILQSGPVVD…QGDLGLQMRQ (217 aa)) are b. The c stretch occupies residues 560–634 (LLEASGQAVP…LNKLLLELSA (75 aa)).

Belongs to the heat shock protein 90 family. As to quaternary structure, homodimer.

The protein localises to the cytoplasm. Its function is as follows. Molecular chaperone. Has ATPase activity. This is Chaperone protein HtpG from Xanthomonas campestris pv. campestris (strain 8004).